We begin with the raw amino-acid sequence, 367 residues long: UDP-N-acetylglucosamine--N-acetylmuramyl-(pentapeptide) pyrophosphoryl-undecaprenol N-acetylglucosamine transferase (367 aa).

Residues 13 to 15 (TGG), Asn125, Arg165, Ser192, and Gln293 each bind UDP-N-acetyl-alpha-D-glucosamine.

This sequence belongs to the glycosyltransferase 28 family. MurG subfamily.

Its subcellular location is the cell inner membrane. The catalysed reaction is di-trans,octa-cis-undecaprenyl diphospho-N-acetyl-alpha-D-muramoyl-L-alanyl-D-glutamyl-meso-2,6-diaminopimeloyl-D-alanyl-D-alanine + UDP-N-acetyl-alpha-D-glucosamine = di-trans,octa-cis-undecaprenyl diphospho-[N-acetyl-alpha-D-glucosaminyl-(1-&gt;4)]-N-acetyl-alpha-D-muramoyl-L-alanyl-D-glutamyl-meso-2,6-diaminopimeloyl-D-alanyl-D-alanine + UDP + H(+). It functions in the pathway cell wall biogenesis; peptidoglycan biosynthesis. Its function is as follows. Cell wall formation. Catalyzes the transfer of a GlcNAc subunit on undecaprenyl-pyrophosphoryl-MurNAc-pentapeptide (lipid intermediate I) to form undecaprenyl-pyrophosphoryl-MurNAc-(pentapeptide)GlcNAc (lipid intermediate II). The protein is UDP-N-acetylglucosamine--N-acetylmuramyl-(pentapeptide) pyrophosphoryl-undecaprenol N-acetylglucosamine transferase of Jannaschia sp. (strain CCS1).